A 355-amino-acid chain; its full sequence is Methylthioribose-1-phosphate isomerase (355 aa).

Residues 52 to 54 (RGA), Arg-95, and Gln-204 each bind substrate. The active-site Proton donor is the Asp-245. 255–256 (NK) contributes to the substrate binding site.

This sequence belongs to the eIF-2B alpha/beta/delta subunits family. MtnA subfamily.

It carries out the reaction 5-(methylsulfanyl)-alpha-D-ribose 1-phosphate = 5-(methylsulfanyl)-D-ribulose 1-phosphate. It functions in the pathway amino-acid biosynthesis; L-methionine biosynthesis via salvage pathway; L-methionine from S-methyl-5-thio-alpha-D-ribose 1-phosphate: step 1/6. Functionally, catalyzes the interconversion of methylthioribose-1-phosphate (MTR-1-P) into methylthioribulose-1-phosphate (MTRu-1-P). The protein is Methylthioribose-1-phosphate isomerase of Acaryochloris marina (strain MBIC 11017).